Here is a 434-residue protein sequence, read N- to C-terminus: Ribosomal protein uS12 methylthiotransferase RimO (434 aa).

Residues 6–122 (NRVFLLSLGC…ILTAIGARYR (117 aa)) form the MTTase N-terminal domain. Positions 15, 51, 85, 146, 150, and 153 each coordinate [4Fe-4S] cluster. The Radical SAM core domain maps to 132–361 (TAPGHTSFLK…MELQEGISEE (230 aa)). The TRAM domain maps to 364-431 (KRLEGREIAV…PYELFGTVLK (68 aa)).

Belongs to the methylthiotransferase family. RimO subfamily. [4Fe-4S] cluster serves as cofactor.

The protein localises to the cytoplasm. It catalyses the reaction L-aspartate(89)-[ribosomal protein uS12]-hydrogen + (sulfur carrier)-SH + AH2 + 2 S-adenosyl-L-methionine = 3-methylsulfanyl-L-aspartate(89)-[ribosomal protein uS12]-hydrogen + (sulfur carrier)-H + 5'-deoxyadenosine + L-methionine + A + S-adenosyl-L-homocysteine + 2 H(+). Its function is as follows. Catalyzes the methylthiolation of an aspartic acid residue of ribosomal protein uS12. This is Ribosomal protein uS12 methylthiotransferase RimO from Chlorobium phaeovibrioides (strain DSM 265 / 1930) (Prosthecochloris vibrioformis (strain DSM 265)).